The chain runs to 2176 residues: Nipped-B-like protein scc-2 (2176 aa).

A compositionally biased stretch (polar residues) spans 1–25 (MDPNNLQNSLNGTGNPNFQPVQTNA). 7 disordered regions span residues 1-27 (MDPN…NAGG), 150-170 (PIPQ…QIQS), 464-483 (SEAT…DEEG), 495-514 (MMSV…NQRK), 523-551 (YDSL…DDED), 585-615 (QHFF…IESR), and 669-708 (DSLD…EMDE). Residues 464–473 (SEATQSSSVT) are compositionally biased toward low complexity. Basic and acidic residues-rich tracts occupy residues 597 to 615 (EDRI…IESR) and 685 to 695 (SGGDHHHKGDE). Positions 696-708 (NSDESDEEEEMDE) are enriched in acidic residues. HEAT repeat units follow at residues 1280 to 1312 (DTYL…IIEA), 1320 to 1351 (EDVQ…FVLY), 1353 to 1388 (EEYV…ICEK), 1393 to 1426 (EMIP…LWFQ), 1692 to 1723 (EKVF…FCAQ), 1803 to 1834 (QKYW…TLNQ), and 1840 to 1871 (GASI…IDSK). The segment at 2149–2176 (ITAANDDYDEEEDGGEDSRGPIMEQMEH) is disordered. A compositionally biased stretch (acidic residues) spans 2154–2163 (DDYDEEEDGG).

The protein belongs to the SCC2/Nipped-B family. As to quaternary structure, may heterodimerize with mau-2/SCC4 to form the cohesin loading complex.

It is found in the nucleus. It localises to the chromosome. Functionally, plays an important role in the loading of the cohesin complex on to meiotic chromosomes. Forms a heterodimeric complex (also known as cohesin loading complex) with mau-2/SCC4 which mediates the loading of the cohesin complex onto chromatin. Plays an essential role in cell division during embryonic development. Promotes normal chromosome organization during meiosis. Required for the assembly of the synaptonemal complex between homologous chromosomes to promote sister chromatid cohesion during meiosis. Required for chromosome segregation during mitosis and meiosis. Plays a role in DNA double-strand break (DSB) repair during meiotic recombination and promotes the assembly of the 9-1-1 cell-cycle checkpoint response complex which is required for inducing apoptosis in response to DNA damage, at DNA damage sites. The polypeptide is Nipped-B-like protein scc-2 (Caenorhabditis elegans).